The sequence spans 3078 residues: Probable polyketide synthase 44 (3078 aa).

In terms of domain architecture, Ketosynthase family 3 (KS3) spans 10 to 435 (DNDVAIIGIG…GSNACLILTE (426 aa)). Active-site for beta-ketoacyl synthase activity residues include cysteine 175, histidine 320, and histidine 358. The tract at residues 627 to 660 (GILASISIGHSLGEVSSAVCSGMIDLETGCFIIY) is acyl/malonyl transferase. Residue serine 637 is the For acyl/malonyl transferase activity of the active site. The N-terminal hotdog fold stretch occupies residues 952–1072 (TNHLGYRNER…GRLSTTKHND (121 aa)). In terms of domain architecture, PKS/mFAS DH spans 952 to 1239 (TNHLGYRNER…YTQLTPYKNQ (288 aa)). Histidine 984 functions as the Proton acceptor; for dehydratase activity in the catalytic mechanism. The C-terminal hotdog fold stretch occupies residues 1088–1239 (NFVTIQKKEL…YTQLTPYKNQ (152 aa)). Aspartate 1150 serves as the catalytic Proton donor; for dehydratase activity. The stretch at 2080–2119 (LENIKTDLSNKNDNNNNNNNNNNDNKESNIKELLDNDDDE) forms a coiled coil. The segment at 2087-2108 (LSNKNDNNNNNNNNNNDNKESN) is disordered. Residues 2090–2102 (KNDNNNNNNNNNN) are compositionally biased toward low complexity. The region spanning 2558–2636 (SDDLSIREQI…QLIQSVTDAM (79 aa)) is the Carrier domain. Serine 2596 bears the O-(pantetheine 4'-phosphoryl)serine mark. A helical transmembrane segment spans residues 2694-2714 (NTVFLTGSSGFIGIYILFYLI).

Pantetheine 4'-phosphate is required as a cofactor.

The protein localises to the membrane. Probable polyketide synthase. The sequence is that of Probable polyketide synthase 44 (pks44) from Dictyostelium discoideum (Social amoeba).